The following is a 446-amino-acid chain: N-succinylarginine dihydrolase (446 aa).

Substrate contacts are provided by residues 19–28 (AGLSFGNVAS), Asn110, and 137–138 (HR). The active site involves Glu174. Arg213 lines the substrate pocket. His249 is an active-site residue. Substrate-binding residues include Asp251 and Asn364. Cys370 acts as the Nucleophile in catalysis.

Belongs to the succinylarginine dihydrolase family. As to quaternary structure, homodimer.

It catalyses the reaction N(2)-succinyl-L-arginine + 2 H2O + 2 H(+) = N(2)-succinyl-L-ornithine + 2 NH4(+) + CO2. It functions in the pathway amino-acid degradation; L-arginine degradation via AST pathway; L-glutamate and succinate from L-arginine: step 2/5. Its function is as follows. Catalyzes the hydrolysis of N(2)-succinylarginine into N(2)-succinylornithine, ammonia and CO(2). This Burkholderia mallei (strain NCTC 10247) protein is N-succinylarginine dihydrolase.